We begin with the raw amino-acid sequence, 124 residues long: Small ribosomal subunit protein uS12 (124 aa).

The residue at position 89 (D89) is a 3-methylthioaspartic acid.

Belongs to the universal ribosomal protein uS12 family. As to quaternary structure, part of the 30S ribosomal subunit. Contacts proteins S8 and S17. May interact with IF1 in the 30S initiation complex.

With S4 and S5 plays an important role in translational accuracy. Functionally, interacts with and stabilizes bases of the 16S rRNA that are involved in tRNA selection in the A site and with the mRNA backbone. Located at the interface of the 30S and 50S subunits, it traverses the body of the 30S subunit contacting proteins on the other side and probably holding the rRNA structure together. The combined cluster of proteins S8, S12 and S17 appears to hold together the shoulder and platform of the 30S subunit. The sequence is that of Small ribosomal subunit protein uS12 from Buchnera aphidicola subsp. Cinara cedri (strain Cc).